The chain runs to 365 residues: MAYSKACYKLTTITILLLSFTLPSLAGNAENADVSECKAESGDLSCHNNKEAQKLKIIAIPSILVASMIGVSLPLFSRSIPALGPDREMSVIVKTLASGVILATGFMHVLPDSFDDLTSKCLPEDPWQKFPFATFITMISALLVLMIESFAMCAYARRTSKREGEVVPLENGSNSVDTQNDIQTLENGSSYVEKQEKVNEDKTSELLRNKVIAQILELGIVVHSVVIGLAMGASDNKCTVQSLIAALCFHQLFEGMGLGGSILQAQFKSKTNWTMVFFFSVTTPFGIVLGMAIQKIYDETSPTALIVVGVLNACSAGLLIYMALVNLLAHEFFGPKIQGNIKLHVLGYVATFTGAAGMSLMAKWA.

A signal peptide spans 1-26 (MAYSKACYKLTTITILLLSFTLPSLA). The Extracellular portion of the chain corresponds to 27–56 (GNAENADVSECKAESGDLSCHNNKEAQKLK). The helical transmembrane segment at 57-77 (IIAIPSILVASMIGVSLPLFS) threads the bilayer. At 78–90 (RSIPALGPDREMS) the chain is on the cytoplasmic side. The helical transmembrane segment at 91–111 (VIVKTLASGVILATGFMHVLP) threads the bilayer. Residues 112-129 (DSFDDLTSKCLPEDPWQK) are Extracellular-facing. The helical transmembrane segment at 130–150 (FPFATFITMISALLVLMIESF) threads the bilayer. At 151 to 210 (AMCAYARRTSKREGEVVPLENGSNSVDTQNDIQTLENGSSYVEKQEKVNEDKTSELLRNK) the chain is on the cytoplasmic side. A helical transmembrane segment spans residues 211–231 (VIAQILELGIVVHSVVIGLAM). Over 232 to 242 (GASDNKCTVQS) the chain is Extracellular. The chain crosses the membrane as a helical span at residues 243–263 (LIAALCFHQLFEGMGLGGSIL). Residues 264-272 (QAQFKSKTN) lie on the Cytoplasmic side of the membrane. The helical transmembrane segment at 273–293 (WTMVFFFSVTTPFGIVLGMAI) threads the bilayer. Over 294 to 304 (QKIYDETSPTA) the chain is Extracellular. The chain crosses the membrane as a helical span at residues 305–325 (LIVVGVLNACSAGLLIYMALV). Over 326-344 (NLLAHEFFGPKIQGNIKLH) the chain is Cytoplasmic. A helical membrane pass occupies residues 345–365 (VLGYVATFTGAAGMSLMAKWA).

It belongs to the ZIP transporter (TC 2.A.5) family.

It localises to the cell membrane. Functionally, probably mediates zinc uptake from the rhizosphere. The polypeptide is Zinc transporter 7 (ZIP7) (Arabidopsis thaliana (Mouse-ear cress)).